The sequence spans 1343 residues: Kinesin-like protein KIF7 (1343 aa).

Residues 15 to 349 (PVRVALRVRP…LNYASRAQNI (335 aa)) form the Kinesin motor domain. ATP is bound at residue 94 to 101 (GQTGSGKT). Disordered regions lie at residues 356–382 (NWRPEAERPPEETASGARGPPRHRSET), 451–483 (RSALSSASGPDSGIESASVEDQAAQGAGGRKED), and 611–639 (EVNRLGSGSSAASEEEEEEEEPPRRTLHL). The interaction with DLG5 stretch occupies residues 358 to 479 (RPEAERPPEE…EDQAAQGAGG (122 aa)). The segment at 358–1206 (RPEAERPPEE…LGRYMWINQE (849 aa)) is interaction with SMO. Positions 480-542 (RKEDEGAQQL…ELRLRLELVR (63 aa)) form a coiled coil. The interval 513–775 (AMEQYKLQSD…LRELEGKELQ (263 aa)) is sufficient for interaction with NPHP1. Coiled coils occupy residues 698-1057 (ASEW…AAIE) and 1109-1211 (TLRE…KQKL). A Phosphoserine modification is found at Ser898. Disordered regions lie at residues 1219–1238 (HSRGGEKRSLCSEGRQAPGN) and 1310–1343 (GEAGLPWNFGPLSKPRRELRRASPGMIDVRKNPL).

The protein belongs to the TRAFAC class myosin-kinesin ATPase superfamily. Kinesin family. KIF27 subfamily. As to quaternary structure, can form homodimers and interacts with microtubules. Interacts with GLI1, GLI2, GLI3, SMO and SUFU. Interacts with NPHP1. Interacts with SMO and DLG5 (via PDZ4 or guanylate kinase-like domain). Polyubiquitinated by UBR3. As to expression, embryonic stem cells, melanotic melanoma and Jurkat T-cells. Expressed in heart, lung, liver, kidney, testis, retina, placenta, pancreas, colon, small intestin, prostate and thymus.

Its subcellular location is the cell projection. It localises to the cilium. The protein localises to the cytoplasm. It is found in the cytoskeleton. The protein resides in the cilium basal body. Functionally, essential for hedgehog signaling regulation: acts both as a negative and positive regulator of sonic hedgehog (Shh) and Indian hedgehog (Ihh) pathways, acting downstream of SMO, through both SUFU-dependent and -independent mechanisms. Involved in the regulation of microtubular dynamics. Required for proper organization of the ciliary tip and control of ciliary localization of SUFU-GLI2 complexes. Required for localization of GLI3 to cilia in response to Shh. Negatively regulates Shh signaling by preventing inappropriate activation of the transcriptional activator GLI2 in the absence of ligand. Positively regulates Shh signaling by preventing the processing of the transcription factor GLI3 into its repressor form. In keratinocytes, promotes the dissociation of SUFU-GLI2 complexes, GLI2 nuclear translocation and Shh signaling activation. Involved in the regulation of epidermal differentiation and chondrocyte development. This Homo sapiens (Human) protein is Kinesin-like protein KIF7 (KIF7).